We begin with the raw amino-acid sequence, 388 residues long: Calreticulin (388 aa).

A signal peptide spans 1 to 17 (MQLSLLVGLVCFSAINA). Cysteine 103 and cysteine 135 are joined by a disulfide. An alpha-D-glucoside is bound by residues tyrosine 107, lysine 109, tyrosine 126, and aspartate 133. A run of 7 repeats spans residues 189 to 200 (AESGELEADWDF), 208 to 219 (DPDAKKPEDWDE), 225 to 236 (DEDDKKPEDWDK), 242 to 253 (DPDAKKPEDWDD), 257 to 267 (GEWEPPMVDNP), 271 to 281 (GEWKPKQKKNP), and 285 to 295 (GKWIHPEIEIP). Residues 189-253 (AESGELEADW…DAKKPEDWDD (65 aa)) are 4 X approximate repeats. The tract at residues 193–282 (ELEADWDFLP…WKPKQKKNPA (90 aa)) is disordered. Residues 205–215 (KIKDPDAKKPE) are compositionally biased toward basic and acidic residues. Residues 216 to 227 (DWDEREFIDDED) are compositionally biased toward acidic residues. The span at 228 to 249 (DKKPEDWDKPEHIPDPDAKKPE) shows a compositional bias: basic and acidic residues. Residues 250–259 (DWDDEMDGEW) show a composition bias toward acidic residues. The segment at 257 to 295 (GEWEPPMVDNPEYKGEWKPKQKKNPAYKGKWIHPEIEIP) is 3 X approximate repeats. Position 315 (aspartate 315) interacts with an alpha-D-glucoside. Residues 349-388 (REGEKKKGKKTKKQKKKEKNEKIKKEKMKKRKRANRKKKK) form a disordered region. Composition is skewed to basic residues over residues 354-365 (KKGKKTKKQKKK) and 373-388 (KEKM…KKKK).

Belongs to the calreticulin family.

The protein resides in the endoplasmic reticulum lumen. Its function is as follows. Molecular calcium-binding chaperone promoting folding, oligomeric assembly and quality control in the ER via the calreticulin/calnexin cycle. This lectin may interact transiently with almost all of the monoglucosylated glycoproteins that are synthesized in the ER. This is Calreticulin (crt-1) from Onchocerca volvulus.